A 294-amino-acid chain; its full sequence is Elongation factor Ts (294 aa).

Residues 78–81 are involved in Mg(2+) ion dislocation from EF-Tu; that stretch reads TDFV.

The protein belongs to the EF-Ts family.

The protein resides in the cytoplasm. In terms of biological role, associates with the EF-Tu.GDP complex and induces the exchange of GDP to GTP. It remains bound to the aminoacyl-tRNA.EF-Tu.GTP complex up to the GTP hydrolysis stage on the ribosome. This chain is Elongation factor Ts, found in Mycoplasma mobile (strain ATCC 43663 / 163K / NCTC 11711) (Mesomycoplasma mobile).